Reading from the N-terminus, the 230-residue chain is Endonuclease NucS (230 aa).

Belongs to the NucS endonuclease family.

The protein resides in the cytoplasm. In terms of biological role, cleaves both 3' and 5' ssDNA extremities of branched DNA structures. This is Endonuclease NucS from Corynebacterium glutamicum (strain R).